The chain runs to 255 residues: MCELLGMSANVPTDICFSFTGLVQRGGGTGPHKDGWGITFYEGKGCRTFKDPQPSFNSPIAKLVQDYPIKSCSVVAHIRQANRGEVALENTHPFTRELWGRNWTYAHNGQLTGYKSLETGNFRPVGETDSEKAFCWLLHKLTQRYPRTPGNMAAVFKYIASLADELRQKGVFNMLLSDGRYVMAYCSTNLHWITRRAPFGVATLLDQDVEIDFSSQTTPNDVVTVIATQPLTGNETWQKIMPGEWRLFCLGERVV.

Cysteine 2 acts as the For GATase activity in catalysis. The Glutamine amidotransferase type-2 domain occupies 2–251 (CELLGMSANV…PGEWRLFCLG (250 aa)).

This chain is Putative glutamine amidotransferase YafJ (yafJ), found in Escherichia coli (strain K12).